The following is a 346-amino-acid chain: MSEPARLISPEKRGEDLDMTLRPQSLDEFTGQAEARANLKVFIEAAKNRGEALDHVLFVGPPGLGKTTLAQIMAKELGVNFRSTSGPVIAKAGDLAALLTNLEERDVLFIDEIHRLNPAVEEILYPAMEDFQLDLIIGEGPAARSVKIDLSKFTLVAATTRLGLLTTPLRDRFGIPVRLSFYTVEELELIVRRGARLMNLPMTEEGAREIARRARGTPRIAGRLLRRVRDFAEVARAEAVTREIADEALTRLLVDNVGFDQLDKRYLNMIAVNFGGGPVGIETIAAGLSEPRDAIEDIIEPYMIQQGFIQRTPRGRVLTAIAWKHLGMQPPKEMEAAQFRLFQEDD.

The tract at residues 1–182 (MSEPARLISP…FGIPVRLSFY (182 aa)) is large ATPase domain (RuvB-L). Residues Leu-21, Arg-22, Gly-63, Lys-66, Thr-67, Thr-68, 129 to 131 (EDF), Arg-172, Tyr-182, and Arg-219 contribute to the ATP site. Mg(2+) is bound at residue Thr-67. Residues 183–253 (TVEELELIVR…IADEALTRLL (71 aa)) are small ATPAse domain (RuvB-S). Positions 256 to 346 (NVGFDQLDKR…AQFRLFQEDD (91 aa)) are head domain (RuvB-H). Positions 292, 311, and 316 each coordinate DNA.

Belongs to the RuvB family. Homohexamer. Forms an RuvA(8)-RuvB(12)-Holliday junction (HJ) complex. HJ DNA is sandwiched between 2 RuvA tetramers; dsDNA enters through RuvA and exits via RuvB. An RuvB hexamer assembles on each DNA strand where it exits the tetramer. Each RuvB hexamer is contacted by two RuvA subunits (via domain III) on 2 adjacent RuvB subunits; this complex drives branch migration. In the full resolvosome a probable DNA-RuvA(4)-RuvB(12)-RuvC(2) complex forms which resolves the HJ.

It localises to the cytoplasm. It carries out the reaction ATP + H2O = ADP + phosphate + H(+). The RuvA-RuvB-RuvC complex processes Holliday junction (HJ) DNA during genetic recombination and DNA repair, while the RuvA-RuvB complex plays an important role in the rescue of blocked DNA replication forks via replication fork reversal (RFR). RuvA specifically binds to HJ cruciform DNA, conferring on it an open structure. The RuvB hexamer acts as an ATP-dependent pump, pulling dsDNA into and through the RuvAB complex. RuvB forms 2 homohexamers on either side of HJ DNA bound by 1 or 2 RuvA tetramers; 4 subunits per hexamer contact DNA at a time. Coordinated motions by a converter formed by DNA-disengaged RuvB subunits stimulates ATP hydrolysis and nucleotide exchange. Immobilization of the converter enables RuvB to convert the ATP-contained energy into a lever motion, pulling 2 nucleotides of DNA out of the RuvA tetramer per ATP hydrolyzed, thus driving DNA branch migration. The RuvB motors rotate together with the DNA substrate, which together with the progressing nucleotide cycle form the mechanistic basis for DNA recombination by continuous HJ branch migration. Branch migration allows RuvC to scan DNA until it finds its consensus sequence, where it cleaves and resolves cruciform DNA. The chain is Holliday junction branch migration complex subunit RuvB from Rhizobium etli (strain CIAT 652).